The primary structure comprises 96 residues: MKLRPMQDRIIVKRVEEETKTAGGIYIPETAKEKPQEGEVVAVGNGKRTEDGKILPLDVKVGDKVLFGKYSGTEVKVEGQDYLIMREDDILGVIEK.

This sequence belongs to the GroES chaperonin family. In terms of assembly, heptamer of 7 subunits arranged in a ring. Interacts with the chaperonin GroEL.

It is found in the cytoplasm. Its function is as follows. Together with the chaperonin GroEL, plays an essential role in assisting protein folding. The GroEL-GroES system forms a nano-cage that allows encapsulation of the non-native substrate proteins and provides a physical environment optimized to promote and accelerate protein folding. GroES binds to the apical surface of the GroEL ring, thereby capping the opening of the GroEL channel. The chain is Co-chaperonin GroES from Geotalea daltonii (strain DSM 22248 / JCM 15807 / FRC-32) (Geobacter daltonii).